Here is a 92-residue protein sequence, read N- to C-terminus: Small ribosomal subunit protein bS20 (92 aa).

The protein belongs to the bacterial ribosomal protein bS20 family.

Functionally, binds directly to 16S ribosomal RNA. The polypeptide is Small ribosomal subunit protein bS20 (Methylacidiphilum infernorum (isolate V4) (Methylokorus infernorum (strain V4))).